We begin with the raw amino-acid sequence, 264 residues long: Thiazole synthase (264 aa).

K101 acts as the Schiff-base intermediate with DXP in catalysis. Residues G162, 188–189 (AG), and 210–211 (NT) each bind 1-deoxy-D-xylulose 5-phosphate.

It belongs to the ThiG family. As to quaternary structure, homotetramer. Forms heterodimers with either ThiH or ThiS.

The protein resides in the cytoplasm. It catalyses the reaction [ThiS sulfur-carrier protein]-C-terminal-Gly-aminoethanethioate + 2-iminoacetate + 1-deoxy-D-xylulose 5-phosphate = [ThiS sulfur-carrier protein]-C-terminal Gly-Gly + 2-[(2R,5Z)-2-carboxy-4-methylthiazol-5(2H)-ylidene]ethyl phosphate + 2 H2O + H(+). It functions in the pathway cofactor biosynthesis; thiamine diphosphate biosynthesis. Functionally, catalyzes the rearrangement of 1-deoxy-D-xylulose 5-phosphate (DXP) to produce the thiazole phosphate moiety of thiamine. Sulfur is provided by the thiocarboxylate moiety of the carrier protein ThiS. In vitro, sulfur can be provided by H(2)S. In Chromobacterium violaceum (strain ATCC 12472 / DSM 30191 / JCM 1249 / CCUG 213 / NBRC 12614 / NCIMB 9131 / NCTC 9757 / MK), this protein is Thiazole synthase.